Here is a 280-residue protein sequence, read N- to C-terminus: MSSSWIVGLLAFLVSLVALTQGLPLLEDLDEKSVPDGRIVGGYATDIAQVPYQISLRYKGITTPENPFRHRCGGSIFNETTIVTAAHCVIGTVASQYKVVAGTNFQTGSDGVITNVKEIVMHEGYYSGAAYNNDIAILFVDPPLPLNNFTIKAIKLALEQPIEGTVSKVSGWGTTSPGGYSSNQLLAVDVPIVSNELCDQDYEDFGDETYRITSAMLCAGKRGVGGADACQGDSGGPLAVRDELYGVVSWGNSCALPNYPGVYANVAYLRPWIDAVLAGL.

Positions 1–22 are cleaved as a signal peptide; it reads MSSSWIVGLLAFLVSLVALTQG. Positions 23–38 are cleaved as a propeptide — activation peptide; the sequence is LPLLEDLDEKSVPDGR. The region spanning 39–278 is the Peptidase S1 domain; the sequence is IVGGYATDIA…LRPWIDAVLA (240 aa). C72 and C88 are disulfide-bonded. Catalysis depends on charge relay system residues H87 and D134. 2 disulfide bridges follow: C198/C218 and C230/C254. The Charge relay system role is filled by S234.

Belongs to the peptidase S1 family.

It is found in the secreted. The protein resides in the extracellular space. It catalyses the reaction Preferential cleavage: Arg-|-Xaa, Lys-|-Xaa.. In Drosophila melanogaster (Fruit fly), this protein is Trypsin zeta (zetaTry).